The primary structure comprises 54 residues: Ovomucoid (54 aa).

The Kazal-like domain occupies 4-54 (VDCSDYPKPSCTLEDKPLCGSDNQTYSNKCSFCNAVVDSNGTLTLSHFGKC). Cystine bridges form between Cys6–Cys36, Cys14–Cys33, and Cys22–Cys54. Asn43 is a glycosylation site (N-linked (GlcNAc...) asparagine).

Its subcellular location is the secreted. This chain is Ovomucoid, found in Megapodius freycinet (Dusky scrubfowl).